A 580-amino-acid polypeptide reads, in one-letter code: Small conductance calcium-activated potassium channel protein 2 (580 aa).

Disordered stretches follow at residues 1 to 68 (MSSC…VSKP) and 88 to 116 (GGGG…KKNQ). The segment covering 48 to 61 (SSPSAAAAASSSAP) has biased composition (low complexity). A compositionally biased stretch (gly residues) spans 88-104 (GGGGGGGGGGGGSGHGS). A helical membrane pass occupies residues 140–160 (LIFGMFGIVVMVIETELSWGA). Tyr161 is modified (phosphotyrosine). A helical transmembrane segment spans residues 169 to 189 (LALKCLISLSTIILLGLIIVY). Residues 215–235 (IFFICLEILVCAIHPIPGNYT) traverse the membrane as a helical segment. A helical transmembrane segment spans residues 257-277 (IILSIPMFLRLYLIARVMLLH). A helical transmembrane segment spans residues 306-326 (LMTICPGTVLLVFSISLWIIA). The segment at residues 346–366 (FLGAMWLISITFLSIGYGDMV) is an intramembrane region (pore-forming). A helical membrane pass occupies residues 375-395 (VCLLTGIMGAGCTALVVAVVA). Positions 413-489 (DTQLTKRVKN…LVDLAKTQNI (77 aa)) are calmodulin-binding. The segment covering 551–560 (HVTYNAERSR) has biased composition (basic and acidic residues). Residues 551-580 (HVTYNAERSRSSSRRRRSSSTAPPTSSESS) form a disordered region. A compositionally biased stretch (low complexity) spans 569 to 580 (SSTAPPTSSESS).

Belongs to the potassium channel KCNN family. KCa2.2/KCNN2 subfamily. Homodimer. Heteromultimer with KCNN1 and KCNN3. The complex is composed of 4 channel subunits each of which binds to a calmodulin subunit which regulates the channel activity through calcium-binding. Interacts (via N-terminal domain) with MPP2. As to expression, brain.

It is found in the membrane. The protein resides in the cytoplasm. It localises to the myofibril. The protein localises to the sarcomere. Its subcellular location is the z line. It catalyses the reaction K(+)(in) = K(+)(out). Its activity is regulated as follows. Inhibited by bee venom neurotoxin apamin. Inhibited by UCL 1684 and tetraethylammonium (TEA). Its function is as follows. Small conductance calcium-activated potassium channel that mediates the voltage-independent transmembrane transfer of potassium across the cell membrane through a constitutive interaction with calmodulin which binds the intracellular calcium allowing its opening. The current is characterized by a voltage-independent activation, an intracellular calcium concentration increase-dependent activation and a single-channel conductance of about 3 picosiemens. Also presents an inwardly rectifying current, thus reducing its already small outward conductance of potassium ions, which is particularly the case when the membrane potential displays positive values, above + 20 mV. The inward rectification could be due to a blockade of the outward current by intracellular divalent cations such as calcium and magnesium and could also be due to an intrinsic property of the channel pore, independent of intracellular divalent ions. There are three positively charged amino acids in the S6 transmembrane domain, close to the pore, that collectively control the conductance and rectification through an electrostatic mechanism. Additionally, electrostatic contributions from these residues also play an important role in determining the intrinsic open probability of the channel in the absence of calcium, affecting the apparent calcium affinity for activation. Forms an heteromeric complex with calmodulin, which is constitutively associated in a calcium-independent manner. Channel opening is triggered when calcium binds the calmodulin resulting in a rotary movement leading to the formation of the dimeric complex to open the gate. Plays a role in the repolarization phase of cardiac action potential. This Rattus norvegicus (Rat) protein is Small conductance calcium-activated potassium channel protein 2.